The following is a 545-amino-acid chain: T-box transcription factor TBX4 (545 aa).

Positions 71-251 form a DNA-binding region, T-box; it reads LHEKELWKKF…NNPFAKGFRG (181 aa). Positions 479 to 509 are disordered; the sequence is QSQVRERGPSASFPRERGLPQGCERKPPSPH. The segment covering 482–505 has biased composition (basic and acidic residues); sequence VRERGPSASFPRERGLPQGCERKP. S507 is subject to Phosphoserine.

Its subcellular location is the nucleus. In terms of biological role, transcriptional regulator that has an essential role in the organogenesis of lungs, pelvis, and hindlimbs. This Homo sapiens (Human) protein is T-box transcription factor TBX4 (TBX4).